The following is a 159-amino-acid chain: Large ribosomal subunit protein uL11 (159 aa).

The protein belongs to the universal ribosomal protein uL11 family. As to quaternary structure, part of the ribosomal stalk of the 50S ribosomal subunit. Interacts with L10 and the large rRNA to form the base of the stalk. L10 forms an elongated spine to which L12 dimers bind in a sequential fashion forming a multimeric L10(L12)X complex.

Its function is as follows. Forms part of the ribosomal stalk which helps the ribosome interact with GTP-bound translation factors. In Methanococcus maripaludis (strain C6 / ATCC BAA-1332), this protein is Large ribosomal subunit protein uL11.